We begin with the raw amino-acid sequence, 222 residues long: Phosphatidylinositol phosphate synthase (222 aa).

31–34 is a binding site for a CDP-1,2-diacyl-sn-glycerol; the sequence is DIVT. A run of 2 helical transmembrane segments spans residues 32-49 and 55-74; these read IVTL…LTLF and WWGA…DGAM. The Mg(2+) site is built by aspartate 68 and aspartate 71. The a CDP-1,2-diacyl-sn-glycerol site is built by glycine 72, arginine 76, and threonine 82. Mg(2+) contacts are provided by aspartate 89 and aspartate 93. Aspartate 93 acts as the Proton acceptor in catalysis. The next 4 helical transmembrane spans lie at 95–112, 118–136, 156–173, and 179–196; these read LGDG…AFGL, VVAT…YIKA, LVIV…FFPL, and VAMW…LQRV.

Belongs to the CDP-alcohol phosphatidyltransferase class-I family. As to quaternary structure, homodimer. Mg(2+) is required as a cofactor.

The protein localises to the cell membrane. It is found in the secreted. Its subcellular location is the cell wall. The catalysed reaction is a CDP-1,2-diacyl-sn-glycerol + 1D-myo-inositol 3-phosphate = a 1,2-diacyl-sn-glycero-3-phospho-(1D-myo-inositol-3-phosphate) + CMP + H(+). It carries out the reaction 1,2-di-(9Z-octadecenoyl)-sn-glycero-3-cytidine-5'-diphosphate + 1D-myo-inositol 3-phosphate = 1,2-di-(9Z-octadecenoyl)-sn-glycero-3-phospho-(1D-myo-inositol-3-phosphate) + CMP + H(+). The enzyme catalyses 1,2-dihexadecanoyl-sn-glycero-3-CDP + 1D-myo-inositol 3-phosphate = 1,2-dihexadecanoyl-sn-glycero-3-phospho-(1D-myo-inositol-3-phosphate) + CMP + H(+). The protein operates within phospholipid metabolism; phosphatidylinositol phosphate biosynthesis. Competitively inhibited by several inositol 1-phosphate analogs, including the phosphonate analog 1-deoxy-1-phosphonomethyl-myo-inositol (Ino-C-P). This leads to inhibition of M.smegmatis growth. Functionally, catalyzes the conjugation of the 1'-hydroxyl group of D-myo-inositol-3-phosphate (also named L-myo-inositol-1-phosphate) with a lipid tail of cytidine diphosphate diacylglycerol (CDP-DAG), forming phosphatidylinositol phosphate (PIP) and CMP. PIP is a precursor of phosphatidylinositol (PI) which is an essential lipid for mycobacteria required for formation of their cell wall. Is essential to the survival of M.smegmatis. The sequence is that of Phosphatidylinositol phosphate synthase from Mycolicibacterium smegmatis (strain ATCC 700084 / mc(2)155) (Mycobacterium smegmatis).